The primary structure comprises 248 residues: NAD kinase (248 aa).

The active-site Proton acceptor is the Asp-45. NAD(+) contacts are provided by residues 45–46 (DG), Arg-50, 110–111 (NE), and Asp-138.

The protein belongs to the NAD kinase family. A divalent metal cation serves as cofactor.

The protein localises to the cytoplasm. It catalyses the reaction NAD(+) + ATP = ADP + NADP(+) + H(+). Functionally, involved in the regulation of the intracellular balance of NAD and NADP, and is a key enzyme in the biosynthesis of NADP. Catalyzes specifically the phosphorylation on 2'-hydroxyl of the adenosine moiety of NAD to yield NADP. The sequence is that of NAD kinase from Sulfurisphaera tokodaii (strain DSM 16993 / JCM 10545 / NBRC 100140 / 7) (Sulfolobus tokodaii).